Reading from the N-terminus, the 348-residue chain is Protein RecA (348 aa).

67–74 contributes to the ATP binding site; the sequence is GPESSGKT.

It belongs to the RecA family.

It is found in the cytoplasm. Can catalyze the hydrolysis of ATP in the presence of single-stranded DNA, the ATP-dependent uptake of single-stranded DNA by duplex DNA, and the ATP-dependent hybridization of homologous single-stranded DNAs. It interacts with LexA causing its activation and leading to its autocatalytic cleavage. In Cutibacterium acnes (Propionibacterium acnes), this protein is Protein RecA.